Reading from the N-terminus, the 269-residue chain is Formamidopyrimidine-DNA glycosylase (269 aa).

Residue Pro2 is the Schiff-base intermediate with DNA of the active site. Glu3 functions as the Proton donor in the catalytic mechanism. The Proton donor; for beta-elimination activity role is filled by Lys58. Positions 91, 110, and 150 each coordinate DNA. The segment at 235–269 (SVYGCKNKKCYRCKGIIIKFVQNQRSTFYCKKCQT) adopts an FPG-type zinc-finger fold. Arg259 acts as the Proton donor; for delta-elimination activity in catalysis.

It belongs to the FPG family. In terms of assembly, monomer. The cofactor is Zn(2+).

It catalyses the reaction Hydrolysis of DNA containing ring-opened 7-methylguanine residues, releasing 2,6-diamino-4-hydroxy-5-(N-methyl)formamidopyrimidine.. The enzyme catalyses 2'-deoxyribonucleotide-(2'-deoxyribose 5'-phosphate)-2'-deoxyribonucleotide-DNA = a 3'-end 2'-deoxyribonucleotide-(2,3-dehydro-2,3-deoxyribose 5'-phosphate)-DNA + a 5'-end 5'-phospho-2'-deoxyribonucleoside-DNA + H(+). In terms of biological role, involved in base excision repair of DNA damaged by oxidation or by mutagenic agents. Acts as a DNA glycosylase that recognizes and removes damaged bases. Has a preference for oxidized purines, such as 7,8-dihydro-8-oxoguanine (8-oxoG). Has AP (apurinic/apyrimidinic) lyase activity and introduces nicks in the DNA strand. Cleaves the DNA backbone by beta-delta elimination to generate a single-strand break at the site of the removed base with both 3'- and 5'-phosphates. This Vesicomyosocius okutanii subsp. Calyptogena okutanii (strain HA) protein is Formamidopyrimidine-DNA glycosylase.